The following is a 500-amino-acid chain: Coiled-coil domain-containing protein 85A (500 aa).

Low complexity predominate over residues 1–23; sequence MSKAAGGSAPAAESCPSAPAGAS. Positions 1 to 30 are disordered; sequence MSKAAGGSAPAAESCPSAPAGASTPTGVDD. Coiled-coil stretches lie at residues 38–104 and 132–171; these read ELLQ…RDLC and MHKEVALYLQKLKELEVKQEEVVKENMELKELCMLLDEEK. 2 disordered regions span residues 200–405 and 426–465; these read RDVG…SGMN and NRMLPQGSFRLSSGADGNNSSLNSPASFSGHTTPSQQPEP. Low complexity predominate over residues 204–215; the sequence is DGSSTSSTGSTD. A compositionally biased stretch (basic and acidic residues) spans 231–254; the sequence is HLQKPRSEGSPEHTKHRSTSPEHL. Positions 372 to 381 are enriched in gly residues; it reads GSGGSGGGSR. Positions 383–395 are enriched in basic and acidic residues; that stretch reads GTLRRPAQEDSSS. The stretch at 404–429 forms a coiled coil; sequence MNESTLSYVRQLEARVRQLEEENRML. Over residues 434-463 the composition is skewed to polar residues; sequence FRLSSGADGNNSSLNSPASFSGHTTPSQQP. Asymmetric dimethylarginine is present on R488.

It belongs to the CCDC85 family. As to quaternary structure, may interact with ARVCF; CTNND1; CTNND2 and PKP4.

Its subcellular location is the cell junction. It is found in the adherens junction. Functionally, may play a role in cell-cell adhesion and epithelium development through its interaction with proteins of the beta-catenin family. This chain is Coiled-coil domain-containing protein 85A (Ccdc85a), found in Mus musculus (Mouse).